The chain runs to 99 residues: UPF0235 protein Cag_0319 (99 aa).

It belongs to the UPF0235 family.

This is UPF0235 protein Cag_0319 from Chlorobium chlorochromatii (strain CaD3).